The sequence spans 138 residues: MAPK kinase substrate protein At1g80180 (138 aa).

The segment at 52–138 (TSEVQDQTTK…RKRPAKRRSR (87 aa)) is disordered. A compositionally biased stretch (basic and acidic residues) spans 69–81 (KPIRTDGGMERSR). Serine 98 carries the phosphoserine modification. Phosphoserine; by MAPK6 is present on serine 105. Positions 121 to 138 (QPGKKVNQRKRPAKRRSR) are enriched in basic residues.

As to expression, expressed in developing cotyledons, mature cotyledons, cotyledon epidermis and stomata.

May play a role in the regulation of stomata patterning. The sequence is that of MAPK kinase substrate protein At1g80180 from Arabidopsis thaliana (Mouse-ear cress).